The chain runs to 262 residues: Acyl-[acyl-carrier-protein]--UDP-N-acetylglucosamine O-acyltransferase (262 aa).

Belongs to the transferase hexapeptide repeat family. LpxA subfamily. As to quaternary structure, homotrimer.

The protein localises to the cytoplasm. The catalysed reaction is a (3R)-hydroxyacyl-[ACP] + UDP-N-acetyl-alpha-D-glucosamine = a UDP-3-O-[(3R)-3-hydroxyacyl]-N-acetyl-alpha-D-glucosamine + holo-[ACP]. It functions in the pathway glycolipid biosynthesis; lipid IV(A) biosynthesis; lipid IV(A) from (3R)-3-hydroxytetradecanoyl-[acyl-carrier-protein] and UDP-N-acetyl-alpha-D-glucosamine: step 1/6. Functionally, involved in the biosynthesis of lipid A, a phosphorylated glycolipid that anchors the lipopolysaccharide to the outer membrane of the cell. In Paraburkholderia phymatum (strain DSM 17167 / CIP 108236 / LMG 21445 / STM815) (Burkholderia phymatum), this protein is Acyl-[acyl-carrier-protein]--UDP-N-acetylglucosamine O-acyltransferase.